The sequence spans 61 residues: Small ribosomal subunit protein uS14 (61 aa).

Residues Cys24, Cys27, Cys40, and Cys43 each coordinate Zn(2+).

This sequence belongs to the universal ribosomal protein uS14 family. Zinc-binding uS14 subfamily. In terms of assembly, part of the 30S ribosomal subunit. Contacts proteins S3 and S10. The cofactor is Zn(2+).

Binds 16S rRNA, required for the assembly of 30S particles and may also be responsible for determining the conformation of the 16S rRNA at the A site. The protein is Small ribosomal subunit protein uS14 of Bacillus anthracis (strain A0248).